A 197-amino-acid chain; its full sequence is Large ribosomal subunit protein uL13A (197 aa).

Phosphoserine is present on Ser-151.

This sequence belongs to the universal ribosomal protein uL13 family. As to quaternary structure, component of the large ribosomal subunit (LSU). Mature yeast ribosomes consist of a small (40S) and a large (60S) subunit. The 40S small subunit contains 1 molecule of ribosomal RNA (18S rRNA) and at least 33 different proteins. The large 60S subunit contains 3 rRNA molecules (25S, 5.8S and 5S rRNA) and at least 46 different proteins.

Its subcellular location is the cytoplasm. The protein localises to the nucleus. The protein resides in the nucleolus. Component of the ribosome, a large ribonucleoprotein complex responsible for the synthesis of proteins in the cell. The small ribosomal subunit (SSU) binds messenger RNAs (mRNAs) and translates the encoded message by selecting cognate aminoacyl-transfer RNA (tRNA) molecules. The large subunit (LSU) contains the ribosomal catalytic site termed the peptidyl transferase center (PTC), which catalyzes the formation of peptide bonds, thereby polymerizing the amino acids delivered by tRNAs into a polypeptide chain. The nascent polypeptides leave the ribosome through a tunnel in the LSU and interact with protein factors that function in enzymatic processing, targeting, and the membrane insertion of nascent chains at the exit of the ribosomal tunnel. In Schizosaccharomyces pombe (strain 972 / ATCC 24843) (Fission yeast), this protein is Large ribosomal subunit protein uL13A (rpl1602).